A 613-amino-acid polypeptide reads, in one-letter code: WD40 repeat-containing protein HOS15 (613 aa).

The region spanning 5-37 (TSVELNFLVFRYLQESGFTHAAFTLGYEAGINK) is the LisH domain. 2 disordered regions span residues 101 to 174 (KKRK…REKM) and 193 to 214 (EIER…KQLG). WD repeat units follow at residues 263-302 (GHTS…FKAV), 322-362 (EKSK…STLS), 363-402 (KHKG…WKQQ), 405-443 (FHSG…PAKT), 446-485 (GHQG…FVHD), 488-536 (EHTK…MLCS), 539-580 (GHRE…KTYT), and 582-613 (NGGI…DFRM).

Its subcellular location is the nucleus. Acts as a repressor of cold stress-regulated gene expression. Interacts specifically with and promotes deacetylation of histone H4. Plays a role in gene regulation for plant acclimation and tolerance to cold stress. The polypeptide is WD40 repeat-containing protein HOS15 (Arabidopsis thaliana (Mouse-ear cress)).